A 446-amino-acid polypeptide reads, in one-letter code: Butyryl-CoA:acetate CoA-transferase (446 aa).

220-224 (GIGGM) is a CoA binding site. The 5-glutamyl coenzyme A thioester intermediate role is filled by Glu245. The CoA site is built by Val320, Gly343, and Lys370.

Belongs to the acetyl-CoA hydrolase/transferase family. Butyryl-CoA CoA-transferase subfamily.

The catalysed reaction is butanoate + acetyl-CoA = butanoyl-CoA + acetate. The enzyme catalyses propanoate + acetyl-CoA = propanoyl-CoA + acetate. It participates in lipid metabolism; butanoate metabolism. Its function is as follows. Coenzyme A-transferase that converts butyryl-CoA to butyrate. Can also use proprionyl-CoA as substrate in vitro. The polypeptide is Butyryl-CoA:acetate CoA-transferase (Anaerostipes caccae (strain DSM 14662 / CCUG 47493 / JCM 13470 / NCIMB 13811 / L1-92)).